The following is a 187-amino-acid chain: Ribosome-recycling factor (187 aa).

Belongs to the RRF family.

It is found in the cytoplasm. In terms of biological role, responsible for the release of ribosomes from messenger RNA at the termination of protein biosynthesis. May increase the efficiency of translation by recycling ribosomes from one round of translation to another. The protein is Ribosome-recycling factor of Orientia tsutsugamushi (strain Ikeda) (Rickettsia tsutsugamushi).